An 89-amino-acid chain; its full sequence is Dynein light chain LC6, flagellar outer arm (89 aa).

The protein belongs to the dynein light chain family. As to quaternary structure, consists of at least 3 heavy chains (alpha, beta and gamma), 2 intermediate chains and 8 light chains.

It is found in the cytoplasm. Its subcellular location is the cytoskeleton. The protein localises to the flagellum axoneme. The polypeptide is Dynein light chain LC6, flagellar outer arm (Heliocidaris crassispina (Sea urchin)).